The sequence spans 95 residues: Protein FAM240C (95 aa).

The segment at 68-95 (KMLQGPGRCPDRVPEATESLHTKDKKAA) is disordered. Residues 76–95 (CPDRVPEATESLHTKDKKAA) are compositionally biased toward basic and acidic residues.

It belongs to the FAM240 family.

The sequence is that of Protein FAM240C (FAM240C) from Homo sapiens (Human).